The chain runs to 122 residues: Large ribosomal subunit protein uL18 (122 aa).

The protein belongs to the universal ribosomal protein uL18 family. In terms of assembly, part of the 50S ribosomal subunit; part of the 5S rRNA/L5/L18/L25 subcomplex. Contacts the 5S and 23S rRNAs.

Functionally, this is one of the proteins that bind and probably mediate the attachment of the 5S RNA into the large ribosomal subunit, where it forms part of the central protuberance. This Desulforapulum autotrophicum (strain ATCC 43914 / DSM 3382 / VKM B-1955 / HRM2) (Desulfobacterium autotrophicum) protein is Large ribosomal subunit protein uL18.